The chain runs to 333 residues: Holliday junction branch migration complex subunit RuvB (333 aa).

The interval 1 to 182 is large ATPase domain (RuvB-L); it reads MTNRILDMEQ…FGITGHMEYY (182 aa). ATP contacts are provided by residues L21, R22, G63, K66, T67, T68, 129 to 131, R172, Y182, and R219; that span reads EDF. T67 is a Mg(2+) binding site. A small ATPAse domain (RuvB-S) region spans residues 183-253; it reads ELADLTEIVE…ITDKALTMLD (71 aa). The head domain (RuvB-H) stretch occupies residues 256–333; it reads REGLDYVDQK…EHLGYPYTEK (78 aa). R292, R311, R313, and R316 together coordinate DNA.

This sequence belongs to the RuvB family. In terms of assembly, homohexamer. Forms an RuvA(8)-RuvB(12)-Holliday junction (HJ) complex. HJ DNA is sandwiched between 2 RuvA tetramers; dsDNA enters through RuvA and exits via RuvB. An RuvB hexamer assembles on each DNA strand where it exits the tetramer. Each RuvB hexamer is contacted by two RuvA subunits (via domain III) on 2 adjacent RuvB subunits; this complex drives branch migration. In the full resolvosome a probable DNA-RuvA(4)-RuvB(12)-RuvC(2) complex forms which resolves the HJ.

It localises to the cytoplasm. It carries out the reaction ATP + H2O = ADP + phosphate + H(+). In terms of biological role, the RuvA-RuvB-RuvC complex processes Holliday junction (HJ) DNA during genetic recombination and DNA repair, while the RuvA-RuvB complex plays an important role in the rescue of blocked DNA replication forks via replication fork reversal (RFR). RuvA specifically binds to HJ cruciform DNA, conferring on it an open structure. The RuvB hexamer acts as an ATP-dependent pump, pulling dsDNA into and through the RuvAB complex. RuvB forms 2 homohexamers on either side of HJ DNA bound by 1 or 2 RuvA tetramers; 4 subunits per hexamer contact DNA at a time. Coordinated motions by a converter formed by DNA-disengaged RuvB subunits stimulates ATP hydrolysis and nucleotide exchange. Immobilization of the converter enables RuvB to convert the ATP-contained energy into a lever motion, pulling 2 nucleotides of DNA out of the RuvA tetramer per ATP hydrolyzed, thus driving DNA branch migration. The RuvB motors rotate together with the DNA substrate, which together with the progressing nucleotide cycle form the mechanistic basis for DNA recombination by continuous HJ branch migration. Branch migration allows RuvC to scan DNA until it finds its consensus sequence, where it cleaves and resolves cruciform DNA. The protein is Holliday junction branch migration complex subunit RuvB of Streptococcus suis (strain 98HAH33).